The chain runs to 77 residues: U8-lycotoxin-Ls1a (77 aa).

An N-terminal signal peptide occupies residues M1 to A20. Positions Q21 to K26 are excised as a propeptide.

Belongs to the neurotoxin 19 (CSTX) family. 08 (U8-Lctx) subfamily. In terms of processing, contains 4 disulfide bonds. In terms of tissue distribution, expressed by the venom gland.

Its subcellular location is the secreted. This Lycosa singoriensis (Wolf spider) protein is U8-lycotoxin-Ls1a.